The sequence spans 701 residues: Polyribonucleotide nucleotidyltransferase (701 aa).

Mg(2+) contacts are provided by Asp487 and Asp493. The KH domain maps to 554-613; that stretch reads PTMLQMKIDSDKIRDVIGKGGATIRGICEETKASIDIEDDGSVKIYGETKEAAEAAKLRV. Residues 623–691 enclose the S1 motif domain; it reads GKIYVGKVER…NRGRIKLSIK (69 aa).

The protein belongs to the polyribonucleotide nucleotidyltransferase family. In terms of assembly, component of the RNA degradosome, which is a multiprotein complex involved in RNA processing and mRNA degradation. The cofactor is Mg(2+).

The protein localises to the cytoplasm. The enzyme catalyses RNA(n+1) + phosphate = RNA(n) + a ribonucleoside 5'-diphosphate. In terms of biological role, involved in mRNA degradation. Catalyzes the phosphorolysis of single-stranded polyribonucleotides processively in the 3'- to 5'-direction. This is Polyribonucleotide nucleotidyltransferase from Pseudomonas aeruginosa (strain LESB58).